The following is a 408-amino-acid chain: Peptidase T (408 aa).

Residue histidine 78 participates in Zn(2+) binding. Residue aspartate 80 is part of the active site. A Zn(2+)-binding site is contributed by aspartate 141. Glutamate 175 serves as the catalytic Proton acceptor. Zn(2+)-binding residues include glutamate 176, aspartate 198, and histidine 380.

This sequence belongs to the peptidase M20B family. It depends on Zn(2+) as a cofactor.

Its subcellular location is the cytoplasm. The enzyme catalyses Release of the N-terminal residue from a tripeptide.. In terms of biological role, cleaves the N-terminal amino acid of tripeptides. The protein is Peptidase T of Clostridium botulinum (strain Okra / Type B1).